The chain runs to 365 residues: UDP-N-acetylglucosamine--N-acetylmuramyl-(pentapeptide) pyrophosphoryl-undecaprenol N-acetylglucosamine transferase (365 aa).

Residues 13-15 (TGG), Asn-125, Arg-165, Ser-192, and Gln-293 each bind UDP-N-acetyl-alpha-D-glucosamine.

This sequence belongs to the glycosyltransferase 28 family. MurG subfamily.

Its subcellular location is the cell inner membrane. It carries out the reaction di-trans,octa-cis-undecaprenyl diphospho-N-acetyl-alpha-D-muramoyl-L-alanyl-D-glutamyl-meso-2,6-diaminopimeloyl-D-alanyl-D-alanine + UDP-N-acetyl-alpha-D-glucosamine = di-trans,octa-cis-undecaprenyl diphospho-[N-acetyl-alpha-D-glucosaminyl-(1-&gt;4)]-N-acetyl-alpha-D-muramoyl-L-alanyl-D-glutamyl-meso-2,6-diaminopimeloyl-D-alanyl-D-alanine + UDP + H(+). The protein operates within cell wall biogenesis; peptidoglycan biosynthesis. Cell wall formation. Catalyzes the transfer of a GlcNAc subunit on undecaprenyl-pyrophosphoryl-MurNAc-pentapeptide (lipid intermediate I) to form undecaprenyl-pyrophosphoryl-MurNAc-(pentapeptide)GlcNAc (lipid intermediate II). The sequence is that of UDP-N-acetylglucosamine--N-acetylmuramyl-(pentapeptide) pyrophosphoryl-undecaprenol N-acetylglucosamine transferase from Ruegeria pomeroyi (strain ATCC 700808 / DSM 15171 / DSS-3) (Silicibacter pomeroyi).